Consider the following 403-residue polypeptide: Glutamyl-tRNA reductase 2 (403 aa).

Substrate-binding positions include 47 to 50, S98, 103 to 105, and Q109; these read TCHR and ETD. The active-site Nucleophile is the C48. 177 to 182 lines the NADP(+) pocket; the sequence is GAGAVG.

This sequence belongs to the glutamyl-tRNA reductase family. In terms of assembly, homodimer.

It catalyses the reaction (S)-4-amino-5-oxopentanoate + tRNA(Glu) + NADP(+) = L-glutamyl-tRNA(Glu) + NADPH + H(+). It participates in porphyrin-containing compound metabolism; protoporphyrin-IX biosynthesis; 5-aminolevulinate from L-glutamyl-tRNA(Glu): step 1/2. In terms of biological role, catalyzes the NADPH-dependent reduction of glutamyl-tRNA(Glu) to glutamate 1-semialdehyde (GSA). In Pyrobaculum arsenaticum (strain DSM 13514 / JCM 11321 / PZ6), this protein is Glutamyl-tRNA reductase 2.